The sequence spans 1022 residues: Protein trachealess (1022 aa).

In terms of domain architecture, bHLH spans 86–139 (LRKEKSRDAARSRRGKENYEFYELAKMLPLPAAITSQLDKASIIRLTISYLKLR). A PAS 1 domain is found at 174-244 (EQHQGTHILQ…DQLGLSLTSG (71 aa)). The disordered stretch occupies residues 239–289 (LSLTSGGGGGGGSSSSGGGGGGAGGGMASPTSGASDDGSGTHGTNNPDVAA). Gly residues predominate over residues 243–265 (SGGGGGGGSSSSGGGGGGAGGGM). Positions 280-289 (HGTNNPDVAA) are enriched in polar residues. In terms of domain architecture, PAS 2 spans 391 to 461 (PPPSVHEIRL…KSHSDLIEKG (71 aa)). Residues 465-508 (TGYYRLMNKSGGYTWLQTCATVVCSTKNADEQNIICVNYVISNR) enclose the PAC domain. 3 disordered regions span residues 525–686 (DSIK…ADSA), 849–896 (AMTP…GDVV), and 962–996 (DDQG…ASQA). 2 stretches are compositionally biased toward low complexity: residues 578–587 (RSAAASHGSS) and 611–625 (PTTV…TPPV). The Nuclear localization signal signature appears at 629-636 (KRKRKTKA). Residue serine 673 is modified to Phosphoserine; by PKB/Akt1. Polar residues predominate over residues 851 to 864 (TPPSSVSPRDSNQP). Residues 987-996 (GSAGSSASQA) show a composition bias toward low complexity.

As to quaternary structure, efficient DNA binding requires dimerization with another bHLH protein. Heterodimer with tgo. In terms of processing, ser-673 phosphorylation by PKB/Akt1 is required for nuclear targeting and transcriptional activity. In terms of tissue distribution, trachea, salivary gland ducts, posterior spiracles (Filzkoeper primordia) and a subset of cells in the CNS.

The protein resides in the nucleus. In terms of biological role, transcription factor, master regulator of tracheal cell fates in the embryo, necessary for the development of the salivary gland duct, Malpighian tubules and the posterior spiracles. It may induce a general fate of branched tubular structures of epithelial origin. Functions with tgo to regulate expression of btl. This Drosophila melanogaster (Fruit fly) protein is Protein trachealess (trh).